The primary structure comprises 85 residues: Elongation factor 1-beta (85 aa).

It belongs to the EF-1-beta/EF-1-delta family.

Functionally, promotes the exchange of GDP for GTP in EF-1-alpha/GDP, thus allowing the regeneration of EF-1-alpha/GTP that could then be used to form the ternary complex EF-1-alpha/GTP/AAtRNA. This Methanospirillum hungatei JF-1 (strain ATCC 27890 / DSM 864 / NBRC 100397 / JF-1) protein is Elongation factor 1-beta.